Consider the following 204-residue polypeptide: Thiamine-phosphate synthase (204 aa).

Residues 37 to 41 (QVREK) and asparagine 69 contribute to the 4-amino-2-methyl-5-(diphosphooxymethyl)pyrimidine site. The Mg(2+) site is built by aspartate 70 and aspartate 89. Serine 108 is a 4-amino-2-methyl-5-(diphosphooxymethyl)pyrimidine binding site. 134–136 (TGT) contributes to the 2-[(2R,5Z)-2-carboxy-4-methylthiazol-5(2H)-ylidene]ethyl phosphate binding site. Lysine 137 lines the 4-amino-2-methyl-5-(diphosphooxymethyl)pyrimidine pocket. Residues glycine 165 and 185–186 (IS) each bind 2-[(2R,5Z)-2-carboxy-4-methylthiazol-5(2H)-ylidene]ethyl phosphate.

The protein belongs to the thiamine-phosphate synthase family. It depends on Mg(2+) as a cofactor.

The enzyme catalyses 2-[(2R,5Z)-2-carboxy-4-methylthiazol-5(2H)-ylidene]ethyl phosphate + 4-amino-2-methyl-5-(diphosphooxymethyl)pyrimidine + 2 H(+) = thiamine phosphate + CO2 + diphosphate. It carries out the reaction 2-(2-carboxy-4-methylthiazol-5-yl)ethyl phosphate + 4-amino-2-methyl-5-(diphosphooxymethyl)pyrimidine + 2 H(+) = thiamine phosphate + CO2 + diphosphate. It catalyses the reaction 4-methyl-5-(2-phosphooxyethyl)-thiazole + 4-amino-2-methyl-5-(diphosphooxymethyl)pyrimidine + H(+) = thiamine phosphate + diphosphate. It participates in cofactor biosynthesis; thiamine diphosphate biosynthesis; thiamine phosphate from 4-amino-2-methyl-5-diphosphomethylpyrimidine and 4-methyl-5-(2-phosphoethyl)-thiazole: step 1/1. In terms of biological role, condenses 4-methyl-5-(beta-hydroxyethyl)thiazole monophosphate (THZ-P) and 2-methyl-4-amino-5-hydroxymethyl pyrimidine pyrophosphate (HMP-PP) to form thiamine monophosphate (TMP). This chain is Thiamine-phosphate synthase, found in Clostridium novyi (strain NT).